The following is a 234-amino-acid chain: Endonuclease V (234 aa).

Positions 42 and 108 each coordinate Mg(2+).

This sequence belongs to the endonuclease V family. It depends on Mg(2+) as a cofactor.

Its subcellular location is the cytoplasm. The enzyme catalyses Endonucleolytic cleavage at apurinic or apyrimidinic sites to products with a 5'-phosphate.. In terms of biological role, DNA repair enzyme involved in the repair of deaminated bases. Selectively cleaves double-stranded DNA at the second phosphodiester bond 3' to a deoxyinosine leaving behind the intact lesion on the nicked DNA. The chain is Endonuclease V from Geotalea uraniireducens (strain Rf4) (Geobacter uraniireducens).